The following is a 360-amino-acid chain: uncharacterized protein (360 aa).

Positions 1–33 (MSGRRKGCSAATASSSSSSPPSRLPPLPGHARR) are disordered.

It belongs to the herpesviridae US22 family.

This is an uncharacterized protein from Human cytomegalovirus (strain AD169) (HHV-5).